We begin with the raw amino-acid sequence, 1360 residues long: DNA-directed RNA polymerase subunit beta (1360 aa).

The protein belongs to the RNA polymerase beta chain family. As to quaternary structure, the RNAP catalytic core consists of 2 alpha, 1 beta, 1 beta' and 1 omega subunit. When a sigma factor is associated with the core the holoenzyme is formed, which can initiate transcription.

The enzyme catalyses RNA(n) + a ribonucleoside 5'-triphosphate = RNA(n+1) + diphosphate. Functionally, DNA-dependent RNA polymerase catalyzes the transcription of DNA into RNA using the four ribonucleoside triphosphates as substrates. In Vesicomyosocius okutanii subsp. Calyptogena okutanii (strain HA), this protein is DNA-directed RNA polymerase subunit beta.